The primary structure comprises 50 residues: LHYQEVKWRKLGSYEHRLHLKPGRLAKHELEVFNGYFVHFPAPENMIPIG.

This sequence belongs to the ITIH family. As to quaternary structure, I-alpha-I plasma protease inhibitors are assembled from one or two heavy chains (HC) and one light chain, bikunin. Inter-alpha-inhibitor (I-alpha-I) is composed of ITIH1/HC1, ITIH2/HC2 and bikunin. Post-translationally, phosphorylated by FAM20C in the extracellular medium.

It localises to the secreted. Its function is as follows. May act as a carrier of hyaluronan in serum or as a binding protein between hyaluronan and other matrix protein, including those on cell surfaces in tissues to regulate the localization, synthesis and degradation of hyaluronan which are essential to cells undergoing biological processes. The protein is Inter-alpha-trypsin inhibitor heavy chain H2 (ITIH2) of Bos taurus (Bovine).